The sequence spans 530 residues: Pre-mRNA-splicing factor PRP9 (530 aa).

A Matrin-type 1 zinc finger spans residues 280-310 (IYCPFCSRWFKTSSVFESHLVGKIHKKNESK). The interval 367–388 (DSTEKEGAEQVDGEQRDGQLQE) is disordered. A compositionally biased stretch (basic and acidic residues) spans 368–388 (STEKEGAEQVDGEQRDGQLQE). A Matrin-type 2 zinc finger spans residues 421-452 (YRCEICSNKVYNGRRTFERHFNEERHIYHLRC). The segment at 488-516 (AVPPKPNPSQLKVPTELELEEEDEEGNVM) is disordered. The segment covering 504-513 (LELEEEDEEG) has biased composition (acidic residues).

Belongs to the SF3A3 family. In terms of assembly, belongs to the CWC complex (or CEF1-associated complex), a spliceosome sub-complex reminiscent of a late-stage spliceosome composed of the U2, U5 and U6 snRNAs and at least BUD13, BUD31, BRR2, CDC40, CEF1, CLF1, CUS1, CWC2, CWC15, CWC21, CWC22, CWC23, CWC24, CWC25, CWC27, ECM2, HSH155, IST3, ISY1, LEA1, MSL1, NTC20, PRP8, PRP9, PRP11, PRP19, PRP21, PRP22, PRP45, PRP46, SLU7, SMB1, SMD1, SMD2, SMD3, SMX2, SMX3, SNT309, SNU114, SPP2, SYF1, SYF2, RSE1 and YJU2.

The protein localises to the nucleus. In terms of biological role, mRNA splicing factors, PRP9, PRP11, and PRP21, are necessary for binding of the U2 snRNP to the pre-mRNA in an early step of spliceosome assembly. This is Pre-mRNA-splicing factor PRP9 (PRP9) from Saccharomyces cerevisiae (strain ATCC 204508 / S288c) (Baker's yeast).